A 108-amino-acid chain; its full sequence is uncharacterized protein (108 aa).

Threonine 56 is subject to Phosphothreonine. A disordered region spans residues 89-108 (AQAKGTEQAEALKKGTSKWF).

The protein localises to the cytoplasm. This is an uncharacterized protein from Schizosaccharomyces pombe (strain 972 / ATCC 24843) (Fission yeast).